Consider the following 353-residue polypeptide: Uroporphyrinogen decarboxylase (353 aa).

Substrate-binding positions include 26–30 (RQAGR), aspartate 75, tyrosine 161, serine 216, and histidine 332.

It belongs to the uroporphyrinogen decarboxylase family. As to quaternary structure, homodimer.

It localises to the cytoplasm. The enzyme catalyses uroporphyrinogen III + 4 H(+) = coproporphyrinogen III + 4 CO2. It participates in porphyrin-containing compound metabolism; protoporphyrin-IX biosynthesis; coproporphyrinogen-III from 5-aminolevulinate: step 4/4. In terms of biological role, catalyzes the decarboxylation of four acetate groups of uroporphyrinogen-III to yield coproporphyrinogen-III. The polypeptide is Uroporphyrinogen decarboxylase (Gluconacetobacter diazotrophicus (strain ATCC 49037 / DSM 5601 / CCUG 37298 / CIP 103539 / LMG 7603 / PAl5)).